We begin with the raw amino-acid sequence, 193 residues long: Cysteine and glycine-rich protein 2 (193 aa).

One can recognise an LIM zinc-binding 1 domain in the interval 10 to 61 (CGACGRTVYHAEEVQCDGRSFHRCCFLCMVCRKNLDSTTVAIHDEEIYCKSC). Positions 64-69 (KKYGPK) match the Nuclear localization signal motif. K91 participates in a covalent cross-link: Glycyl lysine isopeptide (Lys-Gly) (interchain with G-Cter in SUMO2). N6-acetyllysine is present on residues K112 and K131. The LIM zinc-binding 2 domain occupies 119-170 (CSRCGDSVYAAEKIIGAGKPWHKNCFRCAKCGKSLESTTLTEKEGEIYCKGC). An N6-acetyllysine; alternate modification is found at K137. K137 carries the N6-succinyllysine; alternate modification. At K161 the chain carries N6-acetyllysine.

As to quaternary structure, interacts with KAT14. The LIM domain 1 is necessary and sufficient for this interaction. Interacts with GLRX3.

The protein localises to the nucleus. In terms of biological role, drastically down-regulated in response to PDGF-BB or cell injury, that promote smooth muscle cell proliferation and dedifferentiation. Seems to play a role in the development of the embryonic vascular system. The sequence is that of Cysteine and glycine-rich protein 2 (CSRP2) from Bos taurus (Bovine).